Here is a 351-residue protein sequence, read N- to C-terminus: Ca(2+)/H(+) antiporter ChaA (351 aa).

11 helical membrane-spanning segments follow: residues 4 to 24 (IFFI…LMHW), 25 to 45 (PSAV…SYMG), 59 to 79 (IGGL…SLFA), 86 to 106 (GIVL…VAGL), 130 to 150 (GLLI…SVGM), 156 to 176 (LNLS…ALYF), 205 to 225 (VATI…ENLV), 241 to 261 (FIGV…SAII), 282 to 302 (IAMF…TSMP), 303 to 323 (LVFT…MIAI), and 331 to 351 (WFEG…FFLL).

This sequence belongs to the Ca(2+):cation antiporter (CaCA) (TC 2.A.19) family. Cation/proton exchanger (CAX) subfamily. As to quaternary structure, homotrimer.

It is found in the cell membrane. With respect to regulation, calcium efflux is tightly regulated by intracellular pH. Its function is as follows. Ca(+)/H(+) antiporter that extrudes calcium in exchange for external protons. Does not transport sodium or potassium. This Bacillus subtilis (strain 168) protein is Ca(2+)/H(+) antiporter ChaA (chaA).